Consider the following 103-residue polypeptide: Phosphoribosyl-ATP pyrophosphatase (103 aa).

The protein belongs to the PRA-PH family.

Its subcellular location is the cytoplasm. The catalysed reaction is 1-(5-phospho-beta-D-ribosyl)-ATP + H2O = 1-(5-phospho-beta-D-ribosyl)-5'-AMP + diphosphate + H(+). Its pathway is amino-acid biosynthesis; L-histidine biosynthesis; L-histidine from 5-phospho-alpha-D-ribose 1-diphosphate: step 2/9. This chain is Phosphoribosyl-ATP pyrophosphatase, found in Cereibacter sphaeroides (strain ATCC 17029 / ATH 2.4.9) (Rhodobacter sphaeroides).